The sequence spans 295 residues: Proline-rich protein 32 (295 aa).

Disordered regions lie at residues 10–48 (GHAP…GHPG) and 101–120 (ATGE…SGQD).

The sequence is that of Proline-rich protein 32 (PRR32) from Bos taurus (Bovine).